An 822-amino-acid chain; its full sequence is Serine/threonine-protein phosphatase 4 regulatory subunit 3 (822 aa).

The region spanning 1–100 is the WH1 domain; sequence MTDTRRRVKV…DEIWEKICQV (100 aa). The disordered stretch occupies residues 744–822; it reads TSQLSASGHP…PLTKKARLGS (79 aa). Residues 761 to 774 are compositionally biased toward low complexity; that stretch reads SPGSPESPGSVSKS. A compositionally biased stretch (acidic residues) spans 793–808; sequence YPDDDEEDDDNDEEEK.

Belongs to the SMEK family. As to quaternary structure, serine/threonine-protein phosphatase 4 (PP4) occurs in different assemblies of the catalytic and one or more regulatory subunits.

Its function is as follows. Regulatory subunit of serine/threonine-protein phosphatase 4. The chain is Serine/threonine-protein phosphatase 4 regulatory subunit 3 (smek1) from Xenopus laevis (African clawed frog).